The chain runs to 172 residues: MVDKRESYSKEDLIASGRGELFGQDGPPLPSGNMLMMDRIIKMTEDGGSHNKGFIEAEFDIKPDLWFFDCHFVNDPVMPGCLGLDAMWQLVGFYLGWLGGEGKGRALGVGEVKFTGQILPTAKKVTYKIDFKRVINRKLIMGIADGEVYVDGKLIYEAKDLKVGLFKDTSAF.

His-71 is an active-site residue.

The protein belongs to the thioester dehydratase family. FabA subfamily. As to quaternary structure, homodimer.

It is found in the cytoplasm. It carries out the reaction a (3R)-hydroxyacyl-[ACP] = a (2E)-enoyl-[ACP] + H2O. The enzyme catalyses (3R)-hydroxydecanoyl-[ACP] = (2E)-decenoyl-[ACP] + H2O. The catalysed reaction is (2E)-decenoyl-[ACP] = (3Z)-decenoyl-[ACP]. It participates in lipid metabolism; fatty acid biosynthesis. In terms of biological role, necessary for the introduction of cis unsaturation into fatty acids. Catalyzes the dehydration of (3R)-3-hydroxydecanoyl-ACP to E-(2)-decenoyl-ACP and then its isomerization to Z-(3)-decenoyl-ACP. Can catalyze the dehydratase reaction for beta-hydroxyacyl-ACPs with saturated chain lengths up to 16:0, being most active on intermediate chain length. The chain is 3-hydroxydecanoyl-[acyl-carrier-protein] dehydratase from Proteus mirabilis (strain HI4320).